The sequence spans 366 residues: Chorismate synthase (366 aa).

Positions 48 and 54 each coordinate NADP(+). Residues 125–127 (RSS), 238–239 (NA), Gly-278, 293–297 (KPTSS), and Arg-319 contribute to the FMN site.

This sequence belongs to the chorismate synthase family. As to quaternary structure, homotetramer. Requires FMNH2 as cofactor.

It carries out the reaction 5-O-(1-carboxyvinyl)-3-phosphoshikimate = chorismate + phosphate. It functions in the pathway metabolic intermediate biosynthesis; chorismate biosynthesis; chorismate from D-erythrose 4-phosphate and phosphoenolpyruvate: step 7/7. Functionally, catalyzes the anti-1,4-elimination of the C-3 phosphate and the C-6 proR hydrogen from 5-enolpyruvylshikimate-3-phosphate (EPSP) to yield chorismate, which is the branch point compound that serves as the starting substrate for the three terminal pathways of aromatic amino acid biosynthesis. This reaction introduces a second double bond into the aromatic ring system. This Neisseria meningitidis serogroup B (strain ATCC BAA-335 / MC58) protein is Chorismate synthase.